The following is a 464-amino-acid chain: tRNA modification GTPase MnmE (464 aa).

(6S)-5-formyl-5,6,7,8-tetrahydrofolate contacts are provided by Arg26, Glu92, and Arg131. The TrmE-type G domain occupies 227-385 (GIKVAILGRV…LISALKDYVS (159 aa)). Residue Asn237 participates in K(+) binding. GTP is bound by residues 237-242 (NAGKSS), 256-262 (SNIAGTT), and 281-284 (DTAG). Ser241 is a binding site for Mg(2+). Residues Ser256, Ile258, and Thr261 each contribute to the K(+) site. Thr262 is a binding site for Mg(2+). Lys464 lines the (6S)-5-formyl-5,6,7,8-tetrahydrofolate pocket.

It belongs to the TRAFAC class TrmE-Era-EngA-EngB-Septin-like GTPase superfamily. TrmE GTPase family. As to quaternary structure, homodimer. Heterotetramer of two MnmE and two MnmG subunits. It depends on K(+) as a cofactor.

Its subcellular location is the cytoplasm. Its function is as follows. Exhibits a very high intrinsic GTPase hydrolysis rate. Involved in the addition of a carboxymethylaminomethyl (cmnm) group at the wobble position (U34) of certain tRNAs, forming tRNA-cmnm(5)s(2)U34. This Brachyspira hyodysenteriae (strain ATCC 49526 / WA1) protein is tRNA modification GTPase MnmE.